The following is a 947-amino-acid chain: Bifunctional glutamine synthetase adenylyltransferase/adenylyl-removing enzyme (947 aa).

The interval 1–440 (MTPLSSPLSQ…VFNELIGDDE (440 aa)) is adenylyl removase. The segment at 450–947 (SEPWRDVWQD…ASWRKWLVAV (498 aa)) is adenylyl transferase.

The protein belongs to the GlnE family. The cofactor is Mg(2+).

The enzyme catalyses [glutamine synthetase]-O(4)-(5'-adenylyl)-L-tyrosine + phosphate = [glutamine synthetase]-L-tyrosine + ADP. The catalysed reaction is [glutamine synthetase]-L-tyrosine + ATP = [glutamine synthetase]-O(4)-(5'-adenylyl)-L-tyrosine + diphosphate. In terms of biological role, involved in the regulation of glutamine synthetase GlnA, a key enzyme in the process to assimilate ammonia. When cellular nitrogen levels are high, the C-terminal adenylyl transferase (AT) inactivates GlnA by covalent transfer of an adenylyl group from ATP to specific tyrosine residue of GlnA, thus reducing its activity. Conversely, when nitrogen levels are low, the N-terminal adenylyl removase (AR) activates GlnA by removing the adenylyl group by phosphorolysis, increasing its activity. The regulatory region of GlnE binds the signal transduction protein PII (GlnB) which indicates the nitrogen status of the cell. This Salmonella dublin (strain CT_02021853) protein is Bifunctional glutamine synthetase adenylyltransferase/adenylyl-removing enzyme.